A 138-amino-acid polypeptide reads, in one-letter code: Holo-[acyl-carrier-protein] synthase (138 aa).

2 residues coordinate Mg(2+): D8 and E56.

This sequence belongs to the P-Pant transferase superfamily. AcpS family. The cofactor is Mg(2+).

Its subcellular location is the cytoplasm. It carries out the reaction apo-[ACP] + CoA = holo-[ACP] + adenosine 3',5'-bisphosphate + H(+). Transfers the 4'-phosphopantetheine moiety from coenzyme A to a Ser of acyl-carrier-protein. The sequence is that of Holo-[acyl-carrier-protein] synthase from Thermoanaerobacter pseudethanolicus (strain ATCC 33223 / 39E) (Clostridium thermohydrosulfuricum).